Here is a 136-residue protein sequence, read N- to C-terminus: Pterin-4-alpha-carbinolamine dehydratase 2 (136 aa).

N6-acetyllysine; alternate occurs at positions 120, 124, and 131. An N6-succinyllysine; alternate mark is found at lysine 120, lysine 124, and lysine 131.

The protein belongs to the pterin-4-alpha-carbinolamine dehydratase family. In terms of assembly, homotetramer. Interacts with DYRK1B.

The enzyme catalyses (4aS,6R)-4a-hydroxy-L-erythro-5,6,7,8-tetrahydrobiopterin = (6R)-L-erythro-6,7-dihydrobiopterin + H2O. Involved in tetrahydrobiopterin biosynthesis. Seems to both prevent the formation of 7-pterins and accelerate the formation of quinonoid-BH2. In terms of biological role, regulates the dimerization of homeodomain protein HNF-1-alpha and enhances its transcriptional activity. The sequence is that of Pterin-4-alpha-carbinolamine dehydratase 2 (Pcbd2) from Mus musculus (Mouse).